We begin with the raw amino-acid sequence, 503 residues long: GMP synthase [glutamine-hydrolyzing] (503 aa).

Positions 1 to 178 constitute a Glutamine amidotransferase type-1 domain; the sequence is MREANVYSEI…LHRAAGIPAD (178 aa). Residue C60 is the Nucleophile of the active site. Active-site residues include H152 and E154. In terms of domain architecture, GMPS ATP-PPase spans 179 to 377; that stretch reads WNSGNVIADQ…LGLPEVIVGR (199 aa). 206–212 contributes to the ATP binding site; that stretch reads SGGVDSA.

Homodimer.

The enzyme catalyses XMP + L-glutamine + ATP + H2O = GMP + L-glutamate + AMP + diphosphate + 2 H(+). The protein operates within purine metabolism; GMP biosynthesis; GMP from XMP (L-Gln route): step 1/1. In terms of biological role, catalyzes the synthesis of GMP from XMP. The polypeptide is GMP synthase [glutamine-hydrolyzing] (Leifsonia xyli subsp. xyli (strain CTCB07)).